The following is a 461-amino-acid chain: ERBB receptor feedback inhibitor 1 (461 aa).

Residue Ser-2 is modified to N-acetylserine. 2 positions are modified to phosphothreonine: Thr-126 and Thr-130. The disordered stretch occupies residues 228-353; that stretch reads QNRVVPDPNP…VMPPTQSFAP (126 aa). A phosphoserine mark is found at Ser-251 and Ser-272. The span at 265–274 shows a compositional bias: polar residues; sequence SSCTHRASPS. A compositionally biased stretch (pro residues) spans 283-292; that stretch reads PPRVPIPPRP. Position 301 is a phosphoserine (Ser-301). Basic and acidic residues predominate over residues 311–324; it reads DEDRPPKVPPREPL. Positions 325–336 are enriched in polar residues; sequence SRSNSRTPSPKS. An interaction with EGFR and ERBB2 and regulation of EGFR activation region spans residues 333–362; the sequence is SPKSLPSYLNGVMPPTQSFAPDPKYVSSKA. Residue Ser-460 is modified to Phosphoserine.

This sequence belongs to the MIG6 family. As to quaternary structure, interacts with EGFR. Interacts with ERBB2. In terms of tissue distribution, detected in lung, in airway epithelial cells and alveolar type 2 cells (at protein level). Detected in uterus stroma, luminal epithelium and glandular epithelium.

Its subcellular location is the cytoplasm. It is found in the cell membrane. It localises to the nucleus. Functionally, negative regulator of EGFR signaling in skin morphogenesis. Acts as a negative regulator for several EGFR family members, including ERBB2, ERBB3 and ERBB4. Inhibits EGFR catalytic activity by interfering with its dimerization. Inhibits autophosphorylation of EGFR, ERBB2 and ERBB4. Important for normal keratinocyte proliferation and differentiation. Plays a role in modulating the response to steroid hormones in the uterus. Required for normal response to progesterone in the uterus and for fertility. Mediates epithelial estrogen responses in the uterus by regulating ESR1 levels and activation. Important for regulation of endometrium cell proliferation. Important for normal prenatal and perinatal lung development. The sequence is that of ERBB receptor feedback inhibitor 1 (Errfi1) from Mus musculus (Mouse).